The chain runs to 25 residues: Cytochrome c oxidase subunit 1 (25 aa).

This sequence belongs to the heme-copper respiratory oxidase family. Requires Cu(2+) as cofactor. Heme is required as a cofactor.

The protein resides in the cell inner membrane. The catalysed reaction is 4 Fe(II)-[cytochrome c] + O2 + 8 H(+)(in) = 4 Fe(III)-[cytochrome c] + 2 H2O + 4 H(+)(out). Its pathway is energy metabolism; oxidative phosphorylation. Functionally, subunit I and II form the functional core of the enzyme complex. Electrons originating in cytochrome c are transferred via heme a and Cu(A) to the binuclear center formed by heme a3 and Cu(B). This cytochrome c oxidase shows proton pump activity across the membrane in addition to the electron transfer. The sequence is that of Cytochrome c oxidase subunit 1 (ctaD) from Paracoccus versutus (Thiobacillus versutus).